Consider the following 213-residue polypeptide: Protein-L-isoaspartate O-methyltransferase (213 aa).

Residue Ser62 is part of the active site.

It belongs to the methyltransferase superfamily. L-isoaspartyl/D-aspartyl protein methyltransferase family.

It localises to the cytoplasm. It catalyses the reaction [protein]-L-isoaspartate + S-adenosyl-L-methionine = [protein]-L-isoaspartate alpha-methyl ester + S-adenosyl-L-homocysteine. Its function is as follows. Catalyzes the methyl esterification of L-isoaspartyl residues in peptides and proteins that result from spontaneous decomposition of normal L-aspartyl and L-asparaginyl residues. It plays a role in the repair and/or degradation of damaged proteins. This Desulfovibrio desulfuricans (strain ATCC 27774 / DSM 6949 / MB) protein is Protein-L-isoaspartate O-methyltransferase.